We begin with the raw amino-acid sequence, 183 residues long: Ribosome-recycling factor (183 aa).

This sequence belongs to the RRF family.

The protein resides in the cytoplasm. Responsible for the release of ribosomes from messenger RNA at the termination of protein biosynthesis. May increase the efficiency of translation by recycling ribosomes from one round of translation to another. This Christiangramia forsetii (strain DSM 17595 / CGMCC 1.15422 / KT0803) (Gramella forsetii) protein is Ribosome-recycling factor.